A 194-amino-acid polypeptide reads, in one-letter code: Peptidyl-tRNA hydrolase (194 aa).

Tyr16 contacts tRNA. The active-site Proton acceptor is the His21. The tRNA site is built by Phe67, Asn69, and Asn115.

This sequence belongs to the PTH family. Monomer.

It is found in the cytoplasm. It catalyses the reaction an N-acyl-L-alpha-aminoacyl-tRNA + H2O = an N-acyl-L-amino acid + a tRNA + H(+). In terms of biological role, hydrolyzes ribosome-free peptidyl-tRNAs (with 1 or more amino acids incorporated), which drop off the ribosome during protein synthesis, or as a result of ribosome stalling. Catalyzes the release of premature peptidyl moieties from peptidyl-tRNA molecules trapped in stalled 50S ribosomal subunits, and thus maintains levels of free tRNAs and 50S ribosomes. This chain is Peptidyl-tRNA hydrolase, found in Klebsiella pneumoniae (strain 342).